The chain runs to 81 residues: uncharacterized protein (81 aa).

The N-terminal stretch at 1–24 is a signal peptide; sequence MRKILKIVSLLILLLLLVYSFFSP. Topologically, residues 25–28 are extracellular; that stretch reads NSQL. A helical membrane pass occupies residues 29 to 49; the sequence is FVFVQLIIIAFLIGFGINCFV. The Cytoplasmic segment spans residues 50 to 81; the sequence is KKERYQGTLYFVIAICNITINLDKINELIQSI.

The protein localises to the cell membrane. This is an uncharacterized protein from Bacillus subtilis (strain 168).